Here is a 460-residue protein sequence, read N- to C-terminus: ATP synthase subunit beta (460 aa).

150-157 contacts ATP; it reads GGAGVGKT.

This sequence belongs to the ATPase alpha/beta chains family. In terms of assembly, F-type ATPases have 2 components, CF(1) - the catalytic core - and CF(0) - the membrane proton channel. CF(1) has five subunits: alpha(3), beta(3), gamma(1), delta(1), epsilon(1). CF(0) has three main subunits: a(1), b(2) and c(9-12). The alpha and beta chains form an alternating ring which encloses part of the gamma chain. CF(1) is attached to CF(0) by a central stalk formed by the gamma and epsilon chains, while a peripheral stalk is formed by the delta and b chains.

The protein localises to the cell inner membrane. It catalyses the reaction ATP + H2O + 4 H(+)(in) = ADP + phosphate + 5 H(+)(out). Functionally, produces ATP from ADP in the presence of a proton gradient across the membrane. The catalytic sites are hosted primarily by the beta subunits. The protein is ATP synthase subunit beta of Escherichia coli (strain SMS-3-5 / SECEC).